We begin with the raw amino-acid sequence, 118 residues long: NADH-ubiquinone oxidoreductase chain 3 (118 aa).

2 consecutive transmembrane segments (helical) span residues 4–24 (FAPICIYLVISLLVSLIPLGV) and 87–107 (IDPFGSWSMMAFLLILTIGSL).

This sequence belongs to the complex I subunit 3 family.

The protein localises to the mitochondrion membrane. It catalyses the reaction a ubiquinone + NADH + 5 H(+)(in) = a ubiquinol + NAD(+) + 4 H(+)(out). Core subunit of the mitochondrial membrane respiratory chain NADH dehydrogenase (Complex I) that is believed to belong to the minimal assembly required for catalysis. Complex I functions in the transfer of electrons from NADH to the respiratory chain. The immediate electron acceptor for the enzyme is believed to be ubiquinone. This is NADH-ubiquinone oxidoreductase chain 3 (ND3) from Panax ginseng (Korean ginseng).